A 446-amino-acid polypeptide reads, in one-letter code: Transcription factor SOX-8 (446 aa).

Disordered stretches follow at residues 1-58, 155-259, and 318-378; these read MLDM…DPAE, AERL…RQNI, and HKSA…PFAG. The span at 40–53 shows a compositional bias: gly residues; it reads EGLGRAGVAVGGAR. The dimerization (DIM) stretch occupies residues 58 to 100; the sequence is EAADERFPACIRDAVSQVLKGYDWSLVPMPVRGGGGGALKAKP. Positions 102–170 form a DNA-binding region, HMG box; that stretch reads VKRPMNAFMV…QHKKDHPDYK (69 aa). 3 stretches are compositionally biased toward basic and acidic residues: residues 155 to 171, 210 to 219, and 242 to 253; these read AERL…DYKY, DGHHHGDHTG, and PELKLEGRRPVD. Residues 224–298 are transactivation domain (TAM); that stretch reads PPTPPTTPKT…LPLGGPAPPE (75 aa). The segment at 335 to 446 is transactivation domain (TAC); it reads RPHIKTEQPS…QPVYTTLTRP (112 aa). A compositionally biased stretch (low complexity) spans 362-378; sequence SGQSSATPAAPAGPFAG. A 9aaTAD motif is present at residues 400–408; that stretch reads PGLYQYPCF. The segment at 425-446 is disordered; it reads LPPAHSPTSHWDQPVYTTLTRP. Positions 430–446 are enriched in polar residues; the sequence is SPTSHWDQPVYTTLTRP.

It localises to the nucleus. Transcription factor that may play a role in central nervous system, limb and facial development. May be involved in male sex determination. Binds the consensus motif 5'-[AT][AT]CAA[AT]G-3'. This chain is Transcription factor SOX-8, found in Homo sapiens (Human).